Here is a 349-residue protein sequence, read N- to C-terminus: Protein-glutamate methylesterase/protein-glutamine glutaminase 1 (349 aa).

Positions 4-119 (RILVVDDSAV…KGFLEDSARR (116 aa)) constitute a Response regulatory domain. D53 bears the 4-aspartylphosphate mark. Positions 159 to 349 (PRAGRAELVV…VASAVLAWAR (191 aa)) constitute a CheB-type methylesterase domain. Catalysis depends on residues S172, H198, and D293.

This sequence belongs to the CheB family. In terms of processing, phosphorylated by CheA. Phosphorylation of the N-terminal regulatory domain activates the methylesterase activity.

The protein localises to the cytoplasm. It catalyses the reaction [protein]-L-glutamate 5-O-methyl ester + H2O = L-glutamyl-[protein] + methanol + H(+). The enzyme catalyses L-glutaminyl-[protein] + H2O = L-glutamyl-[protein] + NH4(+). Functionally, involved in chemotaxis. Part of a chemotaxis signal transduction system that modulates chemotaxis in response to various stimuli. Catalyzes the demethylation of specific methylglutamate residues introduced into the chemoreceptors (methyl-accepting chemotaxis proteins or MCP) by CheR. Also mediates the irreversible deamidation of specific glutamine residues to glutamic acid. This is Protein-glutamate methylesterase/protein-glutamine glutaminase 1 from Anaeromyxobacter dehalogenans (strain 2CP-C).